A 327-amino-acid chain; its full sequence is Phenylalanine--tRNA ligase alpha subunit (327 aa).

Mg(2+) is bound at residue E252.

This sequence belongs to the class-II aminoacyl-tRNA synthetase family. Phe-tRNA synthetase alpha subunit type 1 subfamily. Tetramer of two alpha and two beta subunits. Mg(2+) is required as a cofactor.

It is found in the cytoplasm. It carries out the reaction tRNA(Phe) + L-phenylalanine + ATP = L-phenylalanyl-tRNA(Phe) + AMP + diphosphate + H(+). The polypeptide is Phenylalanine--tRNA ligase alpha subunit (Vibrio campbellii (strain ATCC BAA-1116)).